The chain runs to 255 residues: 5'-nucleotidase SurE (255 aa).

A divalent metal cation-binding residues include Asp-8, Asp-9, Ser-39, and Asn-95.

Belongs to the SurE nucleotidase family. It depends on a divalent metal cation as a cofactor.

It is found in the cytoplasm. The enzyme catalyses a ribonucleoside 5'-phosphate + H2O = a ribonucleoside + phosphate. Its function is as follows. Nucleotidase that shows phosphatase activity on nucleoside 5'-monophosphates. This Thermosipho africanus (strain TCF52B) protein is 5'-nucleotidase SurE.